Consider the following 62-residue polypeptide: Calmodulin regulator protein PCP4 (62 aa).

The segment at 1 to 39 (MSERQGAGATNGKDKTSGENDGQKKVQEEFDIDMDAPET) is disordered. A compositionally biased stretch (basic and acidic residues) spans 12-28 (GKDKTSGENDGQKKVQE). Positions 28–40 (EEFDIDMDAPETE) are acidic; binds calcium and is required for modulating the calcium-binding kinetics of calmodulin. An IQ domain is found at 39–62 (TERAAVAIQSQFRKFQKKKAGSQS).

This sequence belongs to the PCP4 family. Binds to both calcium-free and calcium-bound calmodulin. The affinity for the calcium-bound form is 50-fold greater.

Functions as a modulator of calcium-binding by calmodulin. Thereby, regulates calmodulin activity and the different processes it controls. For instance, may play a role in neuronal differentiation through activation of calmodulin-dependent kinase signaling pathways. This chain is Calmodulin regulator protein PCP4, found in Homo sapiens (Human).